Here is a 782-residue protein sequence, read N- to C-terminus: Formin-like protein 9 (782 aa).

Residues 1 to 24 (MQNFWFAIFFFLLTCAPPSPLSYA) form the signal peptide. A helical transmembrane segment spans residues 102–122 (LLLPALSAVLVIATVIGLALF). Disordered regions lie at residues 191–223 (DSPE…EEEE), 264–287 (MSPP…RLRV), and 387–407 (SSSQ…PPLV). Residues 214-223 (EVNEEDEEEE) show a composition bias toward acidic residues. Pro residues predominate over residues 396 to 407 (ALPPPTRPPPLV). Residues 406–782 (LVPPSQPFVV…LDQVCKEMGD (377 aa)) enclose the FH2 domain.

The protein belongs to the formin-like family. Class-I subfamily.

Its subcellular location is the membrane. Its function is as follows. Might be involved in the organization and polarity of the actin cytoskeleton. The chain is Formin-like protein 9 (FH9) from Arabidopsis thaliana (Mouse-ear cress).